We begin with the raw amino-acid sequence, 331 residues long: Phenylalanine--tRNA ligase alpha subunit (331 aa).

Residue glutamate 252 participates in Mg(2+) binding.

This sequence belongs to the class-II aminoacyl-tRNA synthetase family. Phe-tRNA synthetase alpha subunit type 1 subfamily. In terms of assembly, tetramer of two alpha and two beta subunits. Mg(2+) is required as a cofactor.

The protein resides in the cytoplasm. The catalysed reaction is tRNA(Phe) + L-phenylalanine + ATP = L-phenylalanyl-tRNA(Phe) + AMP + diphosphate + H(+). The polypeptide is Phenylalanine--tRNA ligase alpha subunit (Hahella chejuensis (strain KCTC 2396)).